The following is a 104-amino-acid chain: uncharacterized protein (104 aa).

In terms of assembly, homodimer.

This is an uncharacterized protein from Bacillus subtilis (strain 168).